We begin with the raw amino-acid sequence, 30 residues long: Alanine carboxypeptidase (30 aa).

The enzyme catalyses Release of a C-terminal alanine from a peptide or a variety of pteroyl or acyl groups.. This Geobacillus stearothermophilus (Bacillus stearothermophilus) protein is Alanine carboxypeptidase.